Here is a 194-residue protein sequence, read N- to C-terminus: Ion-translocating oxidoreductase complex subunit A (194 aa).

Transmembrane regions (helical) follow at residues 4 to 24 (LALI…QFLG), 39 to 59 (IGLS…SHIL), 72 to 92 (LRTI…EMLV), 102 to 122 (VLGI…VALL), 135 to 155 (TTQG…FAAL), and 172 to 192 (AIGM…SGLV).

Belongs to the NqrDE/RnfAE family. In terms of assembly, the complex is composed of six subunits: RnfA, RnfB, RnfC, RnfD, RnfE and RnfG.

Its subcellular location is the cell inner membrane. Its function is as follows. Part of a membrane-bound complex that couples electron transfer with translocation of ions across the membrane. The chain is Ion-translocating oxidoreductase complex subunit A from Pseudomonas aeruginosa (strain LESB58).